The primary structure comprises 269 residues: Putative pyruvate, phosphate dikinase regulatory protein (269 aa).

153 to 160 (GVSRTSKT) lines the ADP pocket.

This sequence belongs to the pyruvate, phosphate/water dikinase regulatory protein family. PDRP subfamily.

The enzyme catalyses N(tele)-phospho-L-histidyl/L-threonyl-[pyruvate, phosphate dikinase] + ADP = N(tele)-phospho-L-histidyl/O-phospho-L-threonyl-[pyruvate, phosphate dikinase] + AMP + H(+). The catalysed reaction is N(tele)-phospho-L-histidyl/O-phospho-L-threonyl-[pyruvate, phosphate dikinase] + phosphate + H(+) = N(tele)-phospho-L-histidyl/L-threonyl-[pyruvate, phosphate dikinase] + diphosphate. Functionally, bifunctional serine/threonine kinase and phosphorylase involved in the regulation of the pyruvate, phosphate dikinase (PPDK) by catalyzing its phosphorylation/dephosphorylation. This is Putative pyruvate, phosphate dikinase regulatory protein from Pediococcus pentosaceus (strain ATCC 25745 / CCUG 21536 / LMG 10740 / 183-1w).